The sequence spans 229 residues: MVHPLLFLEFFRKLLEPLHMSEAGADAVAYTWLIMLLLLLFSFLATRALKMIPCGLQNFMEVVVGGVENMIVETMGEHGRPYFPLVATVGLFVLVSNLIGLIPGFFPPTANINTTAACAIVVFIATHVVGIKRHGIGYIKHFCGPILWLAPVMFFIEVIGHLSRPLSLTLRLFGNMNGHELVLIIFFGLAPFLVPLPMMLMGVLVSFIQAFVFMLLTMIYIQGSLEEAH.

The next 6 membrane-spanning stretches (helical) occupy residues 25–45 (ADAV…SFLA), 86–106 (VATV…PGFF), 111–131 (NINT…VVGI), 142–162 (FCGP…IGHL), 181–201 (LVLI…MMLM), and 202–222 (GVLV…IYIQ).

This sequence belongs to the ATPase A chain family. As to quaternary structure, F-type ATPases have 2 components, CF(1) - the catalytic core - and CF(0) - the membrane proton channel. CF(1) has five subunits: alpha(3), beta(3), gamma(1), delta(1), epsilon(1). CF(0) has three main subunits: a(1), b(2) and c(9-12). The alpha and beta chains form an alternating ring which encloses part of the gamma chain. CF(1) is attached to CF(0) by a central stalk formed by the gamma and epsilon chains, while a peripheral stalk is formed by the delta and b chains.

It is found in the cell inner membrane. Functionally, key component of the proton channel; it plays a direct role in the translocation of protons across the membrane. This Pelobacter propionicus (strain DSM 2379 / NBRC 103807 / OttBd1) protein is ATP synthase subunit a 1.